Reading from the N-terminus, the 474-residue chain is Membrane-bound acylglycerophosphatidylinositol O-acyltransferase mboat7 (474 aa).

The Cytoplasmic portion of the chain corresponds to 1–5 (MSPNE). Residues 6–22 (LTYLAILLGSAPLGFLF) form a helical membrane-spanning segment. Topologically, residues 23 to 33 (KNGSPQVKQRG) are lumenal. A helical membrane pass occupies residues 34-57 (SAAVGVALTLITCHIHSLHSAITI). Residues 58 to 73 (LGTWLIIKILPRSCHF) are Cytoplasmic-facing. Residues 74 to 93 (PTLGWTFTYLLFFRTITYFD) form a helical membrane-spanning segment. Topologically, residues 94 to 193 (IPAPTPFTNA…IPSWKPLVSR (100 aa)) are lumenal. A helical membrane pass occupies residues 194-211 (LKPAPVFGVLFLIASQYF). Topologically, residues 212–230 (PLDYVKTDEFYEQAFLYRL) are cytoplasmic. Residues 231-260 (FYMVPTFFIFRMRFYVAWIFAECGCISAAF) traverse the membrane as a helical segment. The Lumenal portion of the chain corresponds to 261-427 (GAYPVSAKSR…LTFTDTYRYW (167 aa)). N-linked (GlcNAc...) asparagine glycosylation occurs at Asn322. The helical transmembrane segment at 428 to 448 (QSIYFSVHVLAISLFLLGRVL) threads the bilayer. Residues 449 to 473 (ALKSPRRPRNTKEEKAEAKQENRLQ) are Cytoplasmic-facing.

This sequence belongs to the membrane-bound acyltransferase family.

The protein localises to the endoplasmic reticulum membrane. It catalyses the reaction a 1-acyl-sn-glycero-3-phospho-(1D-myo-inositol) + (5Z,8Z,11Z,14Z)-eicosatetraenoyl-CoA = a 1-acyl-2-(5Z,8Z,11Z,14Z-eicosatetraenoyl)-sn-glycero-3-phospho-(1D-myo-inositol) + CoA. It carries out the reaction (5Z,8Z,11Z,14Z)-eicosatetraenoyl-CoA + 1-hexadecanoyl-sn-glycero-3-phosphocholine = 1-hexadecanoyl-2-(5Z,8Z,11Z,14Z-eicosatetraenoyl)-sn-glycero-3-phosphocholine + CoA. The catalysed reaction is a 1-acyl-sn-glycero-3-phospho-(1D-myo-inositol) + an acyl-CoA = a 1,2-diacyl-sn-glycero-3-phospho-(1D-myo-inositol) + CoA. The enzyme catalyses 1-octadecanoyl-sn-glycero-3-phospho-(1D-myo-inositol) + (5Z,8Z,11Z,14Z)-eicosatetraenoyl-CoA = 1-octadecanoyl-2-(5Z,8Z,11Z,14Z-eicosatetraenoyl)-sn-glycero-3-phospho-(1D-myo-inositol) + CoA. The protein operates within lipid metabolism; phospholipid metabolism. Its function is as follows. Acyltransferase which catalyzes the transfer of an acyl group from an acyl-CoA to a lysophosphatidylinositol (1-acylglycerophosphatidylinositol or LPI) leading to the production of a phosphatidylinositol (1,2-diacyl-sn-glycero-3-phosphoinositol or PI) and participates in the reacylation step of the phospholipid remodeling pathway also known as the Lands cycle. Prefers arachidonoyl-CoA as the acyl donor, thus contributing to the regulation of free levels arachidonic acid in cell. The polypeptide is Membrane-bound acylglycerophosphatidylinositol O-acyltransferase mboat7 (mboat7) (Xenopus laevis (African clawed frog)).